A 35-amino-acid chain; its full sequence is Purotoxin-1 (35 aa).

Intrachain disulfides connect Cys-3-Cys-16, Cys-10-Cys-21, Cys-15-Cys-32, and Cys-23-Cys-30.

This sequence belongs to the neurotoxin 33 family. In terms of tissue distribution, expressed by the venom gland.

It localises to the secreted. Its function is as follows. Inhibits P2RX3 receptors. Has an analgesic effect in rat. Enhances the high-affinity desensitization of P2RX3 purinoceptors. At 50 nM, decreases the IC(50) for ambient ATP from 46.5 nM to 12.7 nM in mouse P2RX3. This is Purotoxin-1 from Alopecosa marikovskyi (Wolf spider).